The primary structure comprises 218 residues: Epoxyqueuosine reductase QueH (218 aa).

[4Fe-4S] cluster contacts are provided by C22, C23, C101, and C104. C184 and C186 are disulfide-bonded.

This sequence belongs to the QueH family.

The catalysed reaction is epoxyqueuosine(34) in tRNA + AH2 = queuosine(34) in tRNA + A + H2O. Its pathway is tRNA modification; tRNA-queuosine biosynthesis. Its function is as follows. Catalyzes the conversion of epoxyqueuosine (oQ) to queuosine (Q), which is a hypermodified base found in the wobble positions of tRNA(Asp), tRNA(Asn), tRNA(His) and tRNA(Tyr). The polypeptide is Epoxyqueuosine reductase QueH (Acinetobacter baylyi (strain ATCC 33305 / BD413 / ADP1)).